A 196-amino-acid polypeptide reads, in one-letter code: dITP/XTP pyrophosphatase (196 aa).

Ser-10–Lys-15 serves as a coordination point for substrate. 2 residues coordinate Mg(2+): Glu-40 and Asp-69. Asp-69 acts as the Proton acceptor in catalysis. Substrate contacts are provided by residues Ser-70, Phe-147 to Asp-150, Lys-170, and His-175 to Arg-176.

This sequence belongs to the HAM1 NTPase family. In terms of assembly, homodimer. The cofactor is Mg(2+).

It catalyses the reaction XTP + H2O = XMP + diphosphate + H(+). It carries out the reaction dITP + H2O = dIMP + diphosphate + H(+). The catalysed reaction is ITP + H2O = IMP + diphosphate + H(+). Its function is as follows. Pyrophosphatase that catalyzes the hydrolysis of nucleoside triphosphates to their monophosphate derivatives, with a high preference for the non-canonical purine nucleotides XTP (xanthosine triphosphate), dITP (deoxyinosine triphosphate) and ITP. Seems to function as a house-cleaning enzyme that removes non-canonical purine nucleotides from the nucleotide pool, thus preventing their incorporation into DNA/RNA and avoiding chromosomal lesions. This is dITP/XTP pyrophosphatase from Prochlorococcus marinus (strain NATL1A).